The chain runs to 172 residues: Protein-export protein SecB (172 aa).

The interval 152–172 (AQGAEGGNSGIVMPDGSQARH) is disordered.

This sequence belongs to the SecB family. In terms of assembly, homotetramer, a dimer of dimers. One homotetramer interacts with 1 SecA dimer.

It localises to the cytoplasm. Functionally, one of the proteins required for the normal export of preproteins out of the cell cytoplasm. It is a molecular chaperone that binds to a subset of precursor proteins, maintaining them in a translocation-competent state. It also specifically binds to its receptor SecA. The chain is Protein-export protein SecB from Cupriavidus necator (strain ATCC 17699 / DSM 428 / KCTC 22496 / NCIMB 10442 / H16 / Stanier 337) (Ralstonia eutropha).